The primary structure comprises 548 residues: Rhodopsin kinase GRK7 (548 aa).

Ser-34 bears the Phosphoserine; by PKA mark. Positions 54-171 (FHSLCEQQPI…LASPFYDRFL (118 aa)) constitute an RGS domain. Residues 186-449 (FTEFRVLGKG…ADDPRKHPFF (264 aa)) enclose the Protein kinase domain. Residues 192 to 200 (LGKGGFGEV) and Lys-215 contribute to the ATP site. Asp-311 (proton acceptor) is an active-site residue. The AGC-kinase C-terminal domain occupies 450–515 (QTVNFPRLEA…GAVPVAWQEE (66 aa)). The disordered stretch occupies residues 523–548 (EELNDPNRPSGDGKGDSSKSGVCLLL). At Cys-545 the chain carries Cysteine methyl ester. The S-geranylgeranyl cysteine moiety is linked to residue Cys-545. The propeptide at 546-548 (LLL) is removed in mature form.

It belongs to the protein kinase superfamily. AGC Ser/Thr protein kinase family. GPRK subfamily. As to quaternary structure, interacts (when prenylated) with PDE6D; this promotes release from membranes. Autophosphorylated. Phosphorylation at Ser-34 is regulated by light and activated by cAMP. Retina. Cones and rod.

It localises to the membrane. The catalysed reaction is L-threonyl-[rhodopsin] + ATP = O-phospho-L-threonyl-[rhodopsin] + ADP + H(+). The enzyme catalyses L-seryl-[rhodopsin] + ATP = O-phospho-L-seryl-[rhodopsin] + ADP + H(+). With respect to regulation, inhibited by phosphorylation of Ser-34. Its function is as follows. Retina-specific kinase involved in the shutoff of the photoresponse and adaptation to changing light conditions via cone opsin phosphorylation, including rhodopsin (RHO). The polypeptide is Rhodopsin kinase GRK7 (GRK7) (Ictidomys tridecemlineatus (Thirteen-lined ground squirrel)).